A 185-amino-acid polypeptide reads, in one-letter code: Ribosome-recycling factor (185 aa).

Positions 140-166 (KRQEKDGDITEDEQRSLEKQVQKVTDD) are disordered.

It belongs to the RRF family.

The protein resides in the cytoplasm. In terms of biological role, responsible for the release of ribosomes from messenger RNA at the termination of protein biosynthesis. May increase the efficiency of translation by recycling ribosomes from one round of translation to another. This Lactobacillus johnsonii (strain CNCM I-12250 / La1 / NCC 533) protein is Ribosome-recycling factor.